A 347-amino-acid polypeptide reads, in one-letter code: Histidinol-phosphate aminotransferase (347 aa).

K209 carries the post-translational modification N6-(pyridoxal phosphate)lysine.

It belongs to the class-II pyridoxal-phosphate-dependent aminotransferase family. Histidinol-phosphate aminotransferase subfamily. As to quaternary structure, homodimer. It depends on pyridoxal 5'-phosphate as a cofactor.

The enzyme catalyses L-histidinol phosphate + 2-oxoglutarate = 3-(imidazol-4-yl)-2-oxopropyl phosphate + L-glutamate. Its pathway is amino-acid biosynthesis; L-histidine biosynthesis; L-histidine from 5-phospho-alpha-D-ribose 1-diphosphate: step 7/9. In Syntrophotalea carbinolica (strain DSM 2380 / NBRC 103641 / GraBd1) (Pelobacter carbinolicus), this protein is Histidinol-phosphate aminotransferase.